A 260-amino-acid polypeptide reads, in one-letter code: Thiazole synthase (260 aa).

Lys-96 acts as the Schiff-base intermediate with DXP in catalysis. 1-deoxy-D-xylulose 5-phosphate is bound by residues Gly-157, 184–185, and 206–207; these read AG and NT.

The protein belongs to the ThiG family. As to quaternary structure, homotetramer. Forms heterodimers with either ThiH or ThiS.

It is found in the cytoplasm. The catalysed reaction is [ThiS sulfur-carrier protein]-C-terminal-Gly-aminoethanethioate + 2-iminoacetate + 1-deoxy-D-xylulose 5-phosphate = [ThiS sulfur-carrier protein]-C-terminal Gly-Gly + 2-[(2R,5Z)-2-carboxy-4-methylthiazol-5(2H)-ylidene]ethyl phosphate + 2 H2O + H(+). It participates in cofactor biosynthesis; thiamine diphosphate biosynthesis. Functionally, catalyzes the rearrangement of 1-deoxy-D-xylulose 5-phosphate (DXP) to produce the thiazole phosphate moiety of thiamine. Sulfur is provided by the thiocarboxylate moiety of the carrier protein ThiS. In vitro, sulfur can be provided by H(2)S. This is Thiazole synthase from Rhodopseudomonas palustris (strain HaA2).